A 219-amino-acid chain; its full sequence is Probable GTP-binding protein EngB (219 aa).

Residues 31-205 (VGVEIAFAGR…LSILNEWCHP (175 aa)) form the EngB-type G domain. Residues 39–46 (GRSNAGKS), 66–70 (GRTQL), 84–87 (DLPG), 151–154 (TKSD), and 184–186 (FSA) each bind GTP. Mg(2+)-binding residues include S46 and T68.

This sequence belongs to the TRAFAC class TrmE-Era-EngA-EngB-Septin-like GTPase superfamily. EngB GTPase family. The cofactor is Mg(2+).

Its function is as follows. Necessary for normal cell division and for the maintenance of normal septation. The protein is Probable GTP-binding protein EngB of Shewanella sp. (strain MR-7).